The primary structure comprises 203 residues: MPTRPQEPDRAASDPVEPVPEGAGRPPRGDLPQPGPPARPEATNGEPGPDAAGPAPAEDEYTTAIQELEDRWRRTLADLDNLRKRHARELERERAVERSRTAAAFLPVLDNLELALTHAGADPGAIVEGIRAVRDQAVNVLELLGYPRHAETGVAFDPARHEVVGVVQDPDAPPGTVVEVLRPGYGDGERQLRPAAVTVTKRE.

The segment covering 1–12 (MPTRPQEPDRAA) has biased composition (basic and acidic residues). Residues 1–64 (MPTRPQEPDR…APAEDEYTTA (64 aa)) form a disordered region. Over residues 45–56 (GEPGPDAAGPAP) the composition is skewed to low complexity.

It belongs to the GrpE family. Homodimer.

Its subcellular location is the cytoplasm. Participates actively in the response to hyperosmotic and heat shock by preventing the aggregation of stress-denatured proteins, in association with DnaK and GrpE. It is the nucleotide exchange factor for DnaK and may function as a thermosensor. Unfolded proteins bind initially to DnaJ; upon interaction with the DnaJ-bound protein, DnaK hydrolyzes its bound ATP, resulting in the formation of a stable complex. GrpE releases ADP from DnaK; ATP binding to DnaK triggers the release of the substrate protein, thus completing the reaction cycle. Several rounds of ATP-dependent interactions between DnaJ, DnaK and GrpE are required for fully efficient folding. The chain is Protein GrpE 2 from Streptomyces avermitilis (strain ATCC 31267 / DSM 46492 / JCM 5070 / NBRC 14893 / NCIMB 12804 / NRRL 8165 / MA-4680).